The sequence spans 641 residues: 1-deoxy-D-xylulose-5-phosphate synthase (641 aa).

Thiamine diphosphate is bound by residues His-78 and 119–121 (AHS). Asp-150 is a binding site for Mg(2+). Thiamine diphosphate-binding positions include 151 to 152 (GA), Asn-179, Tyr-288, and Glu-370. Asn-179 lines the Mg(2+) pocket.

Belongs to the transketolase family. DXPS subfamily. As to quaternary structure, homodimer. Mg(2+) is required as a cofactor. The cofactor is thiamine diphosphate.

The enzyme catalyses D-glyceraldehyde 3-phosphate + pyruvate + H(+) = 1-deoxy-D-xylulose 5-phosphate + CO2. It functions in the pathway metabolic intermediate biosynthesis; 1-deoxy-D-xylulose 5-phosphate biosynthesis; 1-deoxy-D-xylulose 5-phosphate from D-glyceraldehyde 3-phosphate and pyruvate: step 1/1. Functionally, catalyzes the acyloin condensation reaction between C atoms 2 and 3 of pyruvate and glyceraldehyde 3-phosphate to yield 1-deoxy-D-xylulose-5-phosphate (DXP). In Azorhizobium caulinodans (strain ATCC 43989 / DSM 5975 / JCM 20966 / LMG 6465 / NBRC 14845 / NCIMB 13405 / ORS 571), this protein is 1-deoxy-D-xylulose-5-phosphate synthase.